The primary structure comprises 787 residues: MNQKTLKIMEYERIKQALRGYLVSAAGQHELAELAPTADAKQLQIWLDESRDGADIYRLENGIPLPKLDDIRPHLHRLAMEAALNGLELAQISRVLWTTSSVVKFFRDLTEKEITLRRLDRVVKELVTLPDVTRRLRTSLEGDGHITDEASPALRQIRQHIAQTEVAIRQTMDQYTRGKDAKYLSETIVTIRDERYVIPVRAEYKQRFGGIVHDQSASGQTLFIEPQAVVGLNNRLRQNQIDERHEEQRILAELTALLDPYQAEILRNSEILGHFDFINAKAKYAHQLKATEPKLSEDNQVNLRQARHPLIDPKKVVANDITIGRDYKTIIVTGPNTGGKTITLKTLALVQLMGQSGLFIPANENSVIGIFDDIFADIGDEQSIEQSLSTFSGHMENIVAILRQADERSLIVVDELGAGTDPQEGAALAIAILDQMGTLGSYVMASTHYPELKAYGYNRPETINASMEFDGETLQPTYHLLIGIPGRSNALDIAARLGMPEQVVAAARGLTDQDSQDLNAMISDLTEQKRHADADAERLRQELAEADELHAQLKKQFDAYQHQKDQLMTDAKREANRLVDESRKRANQIISDLRKKQLAAGKSVVKEDELIAAQGALNALQQDSKLKKNRVLRREKAKLDFHKGDSVLVKSYGQVGVLMEQLDDQHWEVQLGILKMKIATNDLEKAQDPAKSAKQPRASVKRSGSSGMSATLDLRGHRYEEAMAEVDRYIDSALLAGYPSVTIIHGKGTGALRKGVTDYLKRNNRIKSFGFSPANAGGDGSTVVHFK.

Residue 334–341 (GPNTGGKT) participates in ATP binding. The tract at residues 685–709 (KAQDPAKSAKQPRASVKRSGSSGMS) is disordered. The 76-residue stretch at 712–787 (LDLRGHRYEE…GDGSTVVHFK (76 aa)) folds into the Smr domain.

It belongs to the DNA mismatch repair MutS family. MutS2 subfamily. Homodimer. Binds to stalled ribosomes, contacting rRNA.

Endonuclease that is involved in the suppression of homologous recombination and thus may have a key role in the control of bacterial genetic diversity. In terms of biological role, acts as a ribosome collision sensor, splitting the ribosome into its 2 subunits. Detects stalled/collided 70S ribosomes which it binds and splits by an ATP-hydrolysis driven conformational change. Acts upstream of the ribosome quality control system (RQC), a ribosome-associated complex that mediates the extraction of incompletely synthesized nascent chains from stalled ribosomes and their subsequent degradation. Probably generates substrates for RQC. This is Endonuclease MutS2 from Levilactobacillus brevis (strain ATCC 367 / BCRC 12310 / CIP 105137 / JCM 1170 / LMG 11437 / NCIMB 947 / NCTC 947) (Lactobacillus brevis).